A 277-amino-acid polypeptide reads, in one-letter code: Ribosomal RNA small subunit methyltransferase I (277 aa).

This sequence belongs to the methyltransferase superfamily. RsmI family.

The protein localises to the cytoplasm. The enzyme catalyses cytidine(1402) in 16S rRNA + S-adenosyl-L-methionine = 2'-O-methylcytidine(1402) in 16S rRNA + S-adenosyl-L-homocysteine + H(+). In terms of biological role, catalyzes the 2'-O-methylation of the ribose of cytidine 1402 (C1402) in 16S rRNA. This chain is Ribosomal RNA small subunit methyltransferase I, found in Mycoplasma genitalium (strain ATCC 33530 / DSM 19775 / NCTC 10195 / G37) (Mycoplasmoides genitalium).